The primary structure comprises 137 residues: Large-conductance mechanosensitive channel (137 aa).

The next 2 membrane-spanning stretches (helical) occupy residues 10-30 (FAMRGNVVDLAVGVIIGAAFG) and 76-96 (GVFIQNVFDFIIVAFAIFMAI).

Belongs to the MscL family. As to quaternary structure, homopentamer.

Its subcellular location is the cell inner membrane. Its function is as follows. Channel that opens in response to stretch forces in the membrane lipid bilayer. May participate in the regulation of osmotic pressure changes within the cell. The chain is Large-conductance mechanosensitive channel from Klebsiella pneumoniae subsp. pneumoniae (strain ATCC 700721 / MGH 78578).